Consider the following 221-residue polypeptide: Ribosomal RNA small subunit methyltransferase Nep1 (221 aa).

S-adenosyl-L-methionine contacts are provided by residues Gly-174, Gly-179, and 196 to 201 (IGNVSL).

Belongs to the class IV-like SAM-binding methyltransferase superfamily. RNA methyltransferase NEP1 family. In terms of assembly, homodimer.

The enzyme catalyses a pseudouridine in rRNA + S-adenosyl-L-methionine = an N(1)-methylpseudouridine in rRNA + S-adenosyl-L-homocysteine + H(+). Functionally, methyltransferase involved in ribosomal biogenesis. Specifically catalyzes the N1-methylation of the pseudouridine corresponding to position 914 in M.jannaschii 16S rRNA. The polypeptide is Ribosomal RNA small subunit methyltransferase Nep1 (Pyrobaculum calidifontis (strain DSM 21063 / JCM 11548 / VA1)).